The primary structure comprises 257 residues: Ubiquinone biosynthesis O-methyltransferase (257 aa).

Residues Arg43, Gly77, Asp98, and Met144 each coordinate S-adenosyl-L-methionine.

This sequence belongs to the methyltransferase superfamily. UbiG/COQ3 family.

It catalyses the reaction a 3-demethylubiquinol + S-adenosyl-L-methionine = a ubiquinol + S-adenosyl-L-homocysteine + H(+). The enzyme catalyses a 3-(all-trans-polyprenyl)benzene-1,2-diol + S-adenosyl-L-methionine = a 2-methoxy-6-(all-trans-polyprenyl)phenol + S-adenosyl-L-homocysteine + H(+). The protein operates within cofactor biosynthesis; ubiquinone biosynthesis. Its function is as follows. O-methyltransferase that catalyzes the 2 O-methylation steps in the ubiquinone biosynthetic pathway. The sequence is that of Ubiquinone biosynthesis O-methyltransferase from Psychrobacter cryohalolentis (strain ATCC BAA-1226 / DSM 17306 / VKM B-2378 / K5).